Here is an 838-residue protein sequence, read N- to C-terminus: Serine/threonine-protein phosphatase 4 regulatory subunit 3 (838 aa).

Disordered stretches follow at residues 452-482 (NNCN…SPSR) and 745-838 (AINK…SESS). Residues 747–761 (NKQQDNNGERNTTTG) are compositionally biased toward polar residues. Over residues 783–792 (SDGENNENNE) the composition is skewed to acidic residues.

As to quaternary structure, regulatory subunit 3 (R3) of the histone H2A phosphatase complex (HTP-C) consisting of PPH3, PSY2 and PSY4.

The protein localises to the nucleus. Functionally, core regulatory subunit of the histone H2A phosphatase complex, which dephosphorylates H2AS128ph (gamma-H2A) that has been displaced from sites of DNA lesions in the double-stranded DNA break repair process. Dephosphorylation is necessary for efficient recovery from the DNA damage checkpoint. In Eremothecium gossypii (strain ATCC 10895 / CBS 109.51 / FGSC 9923 / NRRL Y-1056) (Yeast), this protein is Serine/threonine-protein phosphatase 4 regulatory subunit 3 (PSY2).